Consider the following 362-residue polypeptide: 5-amino-6-(D-ribitylamino)uracil--L-tyrosine 4-hydroxyphenyl transferase (362 aa).

A Radical SAM core domain is found at 48–294; it reads ITYVVNRNIN…GDTIKNIQVS (247 aa). Positions 62, 66, and 69 each coordinate [4Fe-4S] cluster.

Belongs to the radical SAM superfamily. CofH family. In terms of assembly, consists of two subunits, CofG and CofH. Requires [4Fe-4S] cluster as cofactor.

It carries out the reaction 5-amino-6-(D-ribitylamino)uracil + L-tyrosine + S-adenosyl-L-methionine = 5-amino-5-(4-hydroxybenzyl)-6-(D-ribitylimino)-5,6-dihydrouracil + 2-iminoacetate + 5'-deoxyadenosine + L-methionine + H(+). It functions in the pathway cofactor biosynthesis; coenzyme F0 biosynthesis. Functionally, catalyzes the radical-mediated synthesis of 5-amino-5-(4-hydroxybenzyl)-6-(D-ribitylimino)-5,6-dihydrouracil from 5-amino-6-(D-ribitylamino)uracil and L-tyrosine. The polypeptide is 5-amino-6-(D-ribitylamino)uracil--L-tyrosine 4-hydroxyphenyl transferase (Methanococcus aeolicus (strain ATCC BAA-1280 / DSM 17508 / OCM 812 / Nankai-3)).